The primary structure comprises 567 residues: Urease subunit alpha (567 aa).

Ni(2+) contacts are provided by H134, H136, and K217. An N6-carboxylysine modification is found at K217. Position 219 (H219) interacts with substrate. Ni(2+) is bound by residues H246 and H272. H320 serves as the catalytic Proton donor. D360 serves as a coordination point for Ni(2+).

This sequence belongs to the metallo-dependent hydrolases superfamily. Urease alpha subunit family. Heterotrimer of UreA (gamma), UreB (beta) and UreC (alpha) subunits. Three heterotrimers associate to form the active enzyme. It depends on Ni cation as a cofactor. Post-translationally, carboxylation allows a single lysine to coordinate two nickel ions.

The protein localises to the cytoplasm. The enzyme catalyses urea + 2 H2O + H(+) = hydrogencarbonate + 2 NH4(+). It functions in the pathway nitrogen metabolism; urea degradation; CO(2) and NH(3) from urea (urease route): step 1/1. This is Urease subunit alpha from Pseudomonas putida (strain GB-1).